The following is a 288-amino-acid chain: 2-dehydro-3-deoxyphosphooctonate aldolase (288 aa).

Belongs to the KdsA family.

It is found in the cytoplasm. It carries out the reaction D-arabinose 5-phosphate + phosphoenolpyruvate + H2O = 3-deoxy-alpha-D-manno-2-octulosonate-8-phosphate + phosphate. It functions in the pathway carbohydrate biosynthesis; 3-deoxy-D-manno-octulosonate biosynthesis; 3-deoxy-D-manno-octulosonate from D-ribulose 5-phosphate: step 2/3. It participates in bacterial outer membrane biogenesis; lipopolysaccharide biosynthesis. This Bdellovibrio bacteriovorus (strain ATCC 15356 / DSM 50701 / NCIMB 9529 / HD100) protein is 2-dehydro-3-deoxyphosphooctonate aldolase.